A 581-amino-acid polypeptide reads, in one-letter code: Sulfate adenylyltransferase (581 aa).

Residues 1 to 176 form an N-terminal region; sequence MANAPHGGVL…VQAIQAPTHF (176 aa). The interval 177–401 is catalytic; the sequence is DYVPLRYTPA…LRESYPPRPQ (225 aa). Residue Q204 coordinates sulfate. Residues 204–207 and 298–301 contribute to the ATP site; these read QTRN and GRDH. Residues T205, R206, and N207 contribute to the active site. A sulfate-binding site is contributed by R206. Residue A302 coordinates sulfate. An ATP-binding site is contributed by M340. Residues 402–581 are allosteric regulation domain; adenylyl-sulfate kinase-like; it reads QGFTILLTGL…IMILESQNLV (180 aa). 3'-phosphoadenylyl sulfate is bound by residues 441 to 444, 486 to 487, and R526; these read EELR and TA.

The protein in the N-terminal section; belongs to the sulfate adenylyltransferase family. This sequence in the C-terminal section; belongs to the APS kinase family. In terms of assembly, homohexamer. Dimer of trimers.

It is found in the cytoplasm. It carries out the reaction sulfate + ATP + H(+) = adenosine 5'-phosphosulfate + diphosphate. It participates in sulfur metabolism; hydrogen sulfide biosynthesis; sulfite from sulfate: step 1/3. Its activity is regulated as follows. Allosterically inhibited by 3'-phosphoadenosine 5'-phosphosulfate (PAPS). Its function is as follows. Catalyzes the first intracellular reaction of sulfate assimilation, forming adenosine-5'-phosphosulfate (APS) from inorganic sulfate and ATP. Plays an important role in sulfate activation as a component of the biosynthesis pathway of sulfur-containing amino acids. In Cryptococcus neoformans var. grubii serotype A (strain H99 / ATCC 208821 / CBS 10515 / FGSC 9487) (Filobasidiella neoformans var. grubii), this protein is Sulfate adenylyltransferase.